Here is a 524-residue protein sequence, read N- to C-terminus: Cytochrome P450 monooxygenase patH (524 aa).

Residues 1–4 are Cytoplasmic-facing; sequence MEPF. The chain crosses the membrane as a helical span at residues 5–22; that stretch reads LLLLLVLLPAIVLVRYAF. At 23-524 the chain is on the lumenal side; it reads TYGHRTSTMP…ADVFSRFTEG (502 aa). N266 carries N-linked (GlcNAc...) asparagine glycosylation. C442 contributes to the heme binding site.

It belongs to the cytochrome P450 family. Heme is required as a cofactor.

Its subcellular location is the endoplasmic reticulum membrane. It catalyses the reaction 3-methylphenol + reduced [NADPH--hemoprotein reductase] + O2 = 3-hydroxybenzyl alcohol + oxidized [NADPH--hemoprotein reductase] + H2O + H(+). Its pathway is mycotoxin biosynthesis; patulin biosynthesis. Functionally, cytochrome P450 monooxygenase; part of the gene cluster that mediates the biosynthesis of patulin, an acetate-derived tetraketide mycotoxin produced by several fungal species that shows antimicrobial properties against several bacteria. PatH catalyzes the conversion of m-cresol into m-hydroxybenzyl alcohol. The pathway begins with the synthesis of 6-methylsalicylic acid by the polyketide synthase (PKS) patK via condensation of acetate and malonate units. The 6-methylsalicylic acid decarboxylase patG then catalyzes the decarboxylation of 6-methylsalicylic acid to yield m-cresol (also known as 3-methylphenol). These first reactions occur in the cytosol. The intermediate m-cresol is then transported into the endoplasmic reticulum where the cytochrome P450 monooxygenase patH converts it to m-hydroxybenzyl alcohol, which is further converted to gentisyl alcohol by the cytochrome P450 monooxygenase patI. The oxidoreductases patJ and patO further convert gentisyl alcohol to isoepoxydon in the vacuole. PatN catalyzes then the transformation of isoepoxydon into phyllostine. The cluster protein patF is responsible for the conversion from phyllostine to neopatulin whereas the alcohol dehydrogenase patD converts neopatulin to E-ascladiol. The steps between isoepoxydon and E-ascladiol occur in the cytosol, and E-ascladiol is probably secreted to the extracellular space by one of the cluster-specific transporters patC or patM. Finally, the secreted patulin synthase patE catalyzes the conversion of E-ascladiol to patulin. This chain is Cytochrome P450 monooxygenase patH, found in Penicillium expansum (Blue mold rot fungus).